The primary structure comprises 1382 residues: Eukaryotic translation initiation factor 3 subunit A (1382 aa).

K68 carries the post-translational modification N6-acetyllysine. A coiled-coil region spans residues 82-120; that stretch reads NIKSLEDVVRAYLKMAEEKTEAAKEESQQMVLDIEDLDN. The PCI domain occupies 315 to 498; that stretch reads MQRMSTRVLL…RTLSFGSDLN (184 aa). Residues S492 and S584 each carry the phosphoserine modification. The interval 664–835 is interaction with EIF3B; sequence LDPDFIMAKQ…REERERAERA (172 aa). 2 disordered regions span residues 810-844 and 866-1382; these read KEEE…LREY and EERE…TVRR. 3 stretches are compositionally biased toward basic and acidic residues: residues 866 to 1165, 1177 to 1328, and 1336 to 1371; these read EERE…DDSR, GWRE…DPPR, and SRDR…TKNE. S881, S882, and S895 each carry phosphoserine. Residues 925 to 934 form repeat 1; sequence DEDRSHRRDE. The 25 X 10 AA approximate tandem repeats of [DE]-[DE]-[DE]-R-[SEVGFPILV]-[HPSN]-[RSW]-[RL]-[DRGTIHN]-[EPMANLGDT] stretch occupies residues 925-1172; sequence DEDRSHRRDE…DSRPGPWRPL (248 aa). One copy of the 2; truncated repeat lies at 935–942; the sequence is ERPRRLGD. 20 consecutive repeat copies span residues 943-952, 953-962, 963-972, 973-982, 983-992, 993-1002, 1003-1012, 1013-1022, 1023-1032, 1033-1042, 1043-1052, 1054-1063, 1064-1073, 1074-1083, 1084-1093, 1094-1103, 1104-1113, 1114-1123, 1124-1133, and 1134-1143. Position 949 is a phosphoserine (S949). S1028 is modified (phosphoserine). A 23; truncated repeat occupies 1144–1152; sequence DDDRLSRRA. The stretch at 1153 to 1162 is repeat 24; the sequence is DDDRFPRRGD. A 25; approximate repeat occupies 1163–1172; it reads DSRPGPWRPL. Phosphoserine is present on residues S1188, S1198, S1262, S1336, and S1364.

In terms of assembly, interacts with EIF4G1. Component of the eukaryotic translation initiation factor 3 (eIF-3) complex, which is composed of 13 subunits: EIF3A, EIF3B, EIF3C, EIF3D, EIF3E, EIF3F, EIF3G, EIF3H, EIF3I, EIF3J, EIF3K, EIF3L and EIF3M. The eIF-3 complex appears to include 3 stable modules: module A is composed of EIF3A, EIF3B, EIF3G and EIF3I; module B is composed of EIF3F, EIF3H, and EIF3M; and module C is composed of EIF3C, EIF3D, EIF3E, EIF3L and EIF3K. EIF3C of module C binds EIF3B of module A and EIF3H of module B, thereby linking the three modules. EIF3J is a labile subunit that binds to the eIF-3 complex via EIF3B. The eIF-3 complex interacts with RPS6KB1 under conditions of nutrient depletion. Mitogenic stimulation leads to binding and activation of a complex composed of MTOR and RPTOR, leading to phosphorylation and release of RPS6KB1 and binding of EIF4B to eIF-3. Also interacts with KRT7 and PIWIL2. Phosphorylated. Phosphorylation is enhanced upon serum stimulation.

The protein localises to the cytoplasm. RNA-binding component of the eukaryotic translation initiation factor 3 (eIF-3) complex, which is required for several steps in the initiation of protein synthesis. The eIF-3 complex associates with the 40S ribosome and facilitates the recruitment of eIF-1, eIF-1A, eIF-2:GTP:methionyl-tRNAi and eIF-5 to form the 43S pre-initiation complex (43S PIC). The eIF-3 complex stimulates mRNA recruitment to the 43S PIC and scanning of the mRNA for AUG recognition. The eIF-3 complex is also required for disassembly and recycling of post-termination ribosomal complexes and subsequently prevents premature joining of the 40S and 60S ribosomal subunits prior to initiation. The eIF-3 complex specifically targets and initiates translation of a subset of mRNAs involved in cell proliferation, including cell cycling, differentiation and apoptosis, and uses different modes of RNA stem-loop binding to exert either translational activation or repression. Functionally, (Microbial infection) Essential for the initiation of translation on type-1 viral ribosomal entry sites (IRESs), like for HCV, PV, EV71 or BEV translation. In terms of biological role, (Microbial infection) In case of FCV infection, plays a role in the ribosomal termination-reinitiation event leading to the translation of VP2. The polypeptide is Eukaryotic translation initiation factor 3 subunit A (Homo sapiens (Human)).